Reading from the N-terminus, the 530-residue chain is Ubiquitin carboxyl-terminal hydrolase 17-like protein 1 (530 aa).

Residues 80 to 375 enclose the USP domain; it reads AGLQNMGNTC…QAYVLFYIQK (296 aa). Cysteine 89 (nucleophile) is an active-site residue. Catalysis depends on histidine 334, which acts as the Proton acceptor. Composition is skewed to basic and acidic residues over residues 382-392 and 398-411; these read SESVSRGREPR and DTDRRAKQGELKRD. Residues 382–411 form a disordered region; sequence SESVSRGREPRALGAEDTDRRAKQGELKRD.

This sequence belongs to the peptidase C19 family. USP17 subfamily.

The protein localises to the nucleus. It is found in the endoplasmic reticulum. It catalyses the reaction Thiol-dependent hydrolysis of ester, thioester, amide, peptide and isopeptide bonds formed by the C-terminal Gly of ubiquitin (a 76-residue protein attached to proteins as an intracellular targeting signal).. Deubiquitinating enzyme that removes conjugated ubiquitin from specific proteins to regulate different cellular processes that may include cell proliferation, progression through the cell cycle, apoptosis, cell migration, and the cellular response to viral infection. This Homo sapiens (Human) protein is Ubiquitin carboxyl-terminal hydrolase 17-like protein 1 (USP17L1).